Reading from the N-terminus, the 692-residue chain is UvrABC system protein B (692 aa).

Residues 32 to 187 (ENIENGEKAQ…LLNDLVGIQF (156 aa)) form the Helicase ATP-binding domain. 45-52 (GATGTGKT) is an ATP binding site. The Beta-hairpin motif lies at 98 to 121 (YYDYYQPEAYVPSSDTYIEKDSSV). Residues 436–631 (QIDDLVGEIH…TIKKEIRDLI (196 aa)) form the Helicase C-terminal domain. The UVR domain maps to 656–691 (KALVKKLEKEMQQAAAALDFEGAAQLRDMVLELRAM).

Belongs to the UvrB family. In terms of assembly, forms a heterotetramer with UvrA during the search for lesions. Interacts with UvrC in an incision complex.

It localises to the cytoplasm. The UvrABC repair system catalyzes the recognition and processing of DNA lesions. A damage recognition complex composed of 2 UvrA and 2 UvrB subunits scans DNA for abnormalities. Upon binding of the UvrA(2)B(2) complex to a putative damaged site, the DNA wraps around one UvrB monomer. DNA wrap is dependent on ATP binding by UvrB and probably causes local melting of the DNA helix, facilitating insertion of UvrB beta-hairpin between the DNA strands. Then UvrB probes one DNA strand for the presence of a lesion. If a lesion is found the UvrA subunits dissociate and the UvrB-DNA preincision complex is formed. This complex is subsequently bound by UvrC and the second UvrB is released. If no lesion is found, the DNA wraps around the other UvrB subunit that will check the other stand for damage. The sequence is that of UvrABC system protein B from Lactococcus lactis subsp. cremoris (strain SK11).